Here is a 306-residue protein sequence, read N- to C-terminus: UDP-3-O-acyl-N-acetylglucosamine deacetylase (306 aa).

Zn(2+) is bound by residues histidine 79, histidine 239, and aspartate 243. The active-site Proton donor is the histidine 266.

The protein belongs to the LpxC family. Zn(2+) serves as cofactor.

The enzyme catalyses a UDP-3-O-[(3R)-3-hydroxyacyl]-N-acetyl-alpha-D-glucosamine + H2O = a UDP-3-O-[(3R)-3-hydroxyacyl]-alpha-D-glucosamine + acetate. It participates in glycolipid biosynthesis; lipid IV(A) biosynthesis; lipid IV(A) from (3R)-3-hydroxytetradecanoyl-[acyl-carrier-protein] and UDP-N-acetyl-alpha-D-glucosamine: step 2/6. Functionally, catalyzes the hydrolysis of UDP-3-O-myristoyl-N-acetylglucosamine to form UDP-3-O-myristoylglucosamine and acetate, the committed step in lipid A biosynthesis. The polypeptide is UDP-3-O-acyl-N-acetylglucosamine deacetylase (Glaesserella parasuis serovar 5 (strain SH0165) (Haemophilus parasuis)).